Reading from the N-terminus, the 508-residue chain is Maturase K (508 aa).

The protein belongs to the intron maturase 2 family. MatK subfamily.

The protein resides in the plastid. It is found in the chloroplast. Functionally, usually encoded in the trnK tRNA gene intron. Probably assists in splicing its own and other chloroplast group II introns. The sequence is that of Maturase K from Verbena rigida (Tuberous vervain).